The chain runs to 365 residues: Aminomethyltransferase (365 aa).

It belongs to the GcvT family. As to quaternary structure, the glycine cleavage system is composed of four proteins: P, T, L and H.

The enzyme catalyses N(6)-[(R)-S(8)-aminomethyldihydrolipoyl]-L-lysyl-[protein] + (6S)-5,6,7,8-tetrahydrofolate = N(6)-[(R)-dihydrolipoyl]-L-lysyl-[protein] + (6R)-5,10-methylene-5,6,7,8-tetrahydrofolate + NH4(+). Its function is as follows. The glycine cleavage system catalyzes the degradation of glycine. The protein is Aminomethyltransferase of Frankia alni (strain DSM 45986 / CECT 9034 / ACN14a).